The primary structure comprises 311 residues: Ribosomal RNA small subunit methyltransferase H (311 aa).

S-adenosyl-L-methionine-binding positions include 33–35 (GGH), Asp-51, Phe-78, Asp-99, and Gln-106. Residues 289–311 (EEIEKNRRAHSAKLRAAEKLSFA) are disordered.

It belongs to the methyltransferase superfamily. RsmH family.

The protein resides in the cytoplasm. The enzyme catalyses cytidine(1402) in 16S rRNA + S-adenosyl-L-methionine = N(4)-methylcytidine(1402) in 16S rRNA + S-adenosyl-L-homocysteine + H(+). Specifically methylates the N4 position of cytidine in position 1402 (C1402) of 16S rRNA. In Carboxydothermus hydrogenoformans (strain ATCC BAA-161 / DSM 6008 / Z-2901), this protein is Ribosomal RNA small subunit methyltransferase H.